The following is a 131-amino-acid chain: Small ribosomal subunit protein uS12 (131 aa).

Aspartate 89 is subject to 3-methylthioaspartic acid. The disordered stretch occupies residues 106 to 131 (GVDGRKQGRSKYGAKKAKVAKTASAK). Positions 112–124 (QGRSKYGAKKAKV) are enriched in basic residues.

Belongs to the universal ribosomal protein uS12 family. In terms of assembly, part of the 30S ribosomal subunit. Contacts proteins S8 and S17. May interact with IF1 in the 30S initiation complex.

Functionally, with S4 and S5 plays an important role in translational accuracy. Its function is as follows. Interacts with and stabilizes bases of the 16S rRNA that are involved in tRNA selection in the A site and with the mRNA backbone. Located at the interface of the 30S and 50S subunits, it traverses the body of the 30S subunit contacting proteins on the other side and probably holding the rRNA structure together. The combined cluster of proteins S8, S12 and S17 appears to hold together the shoulder and platform of the 30S subunit. The sequence is that of Small ribosomal subunit protein uS12 from Endomicrobium trichonymphae.